Here is a 450-residue protein sequence, read N- to C-terminus: Glucose-6-phosphate isomerase (450 aa).

T39 carries the post-translational modification Phosphothreonine. The Proton donor role is filled by E291. Catalysis depends on residues H312 and K426.

The protein belongs to the GPI family.

It localises to the cytoplasm. It carries out the reaction alpha-D-glucose 6-phosphate = beta-D-fructose 6-phosphate. Its pathway is carbohydrate biosynthesis; gluconeogenesis. It functions in the pathway carbohydrate degradation; glycolysis; D-glyceraldehyde 3-phosphate and glycerone phosphate from D-glucose: step 2/4. Its function is as follows. Catalyzes the reversible isomerization of glucose-6-phosphate to fructose-6-phosphate. This Bacillus thuringiensis (strain Al Hakam) protein is Glucose-6-phosphate isomerase.